Here is a 190-residue protein sequence, read N- to C-terminus: Putative phosphatidylethanolamine-binding protein (190 aa).

This sequence belongs to the phosphatidylethanolamine-binding protein family.

The polypeptide is Putative phosphatidylethanolamine-binding protein (Plasmodium falciparum).